Consider the following 389-residue polypeptide: P2X purinoceptor 6 (389 aa).

The Cytoplasmic portion of the chain corresponds to 1-45 (MQLQPAGTGNMASAAAAALVSWGFLDYKTEKYVLTRNCRVGVSQR). A helical transmembrane segment spans residues 46-66 (LLQLAVVVYVIGWALLAKKGY). Residues 67 to 335 (QERDLAPQTS…LVTGQAGKFA (269 aa)) are Extracellular-facing. Intrachain disulfides connect Cys-129-Cys-179, Cys-140-Cys-163, and Cys-146-Cys-173. Residues Asn-167, Asn-197, and Asn-212 are each glycosylated (N-linked (GlcNAc...) asparagine). 2 cysteine pairs are disulfide-bonded: Cys-230–Cys-240 and Cys-274–Cys-283. A helical membrane pass occupies residues 336 to 356 (LIPTAITVGTGAAWLGMVTFL). Topologically, residues 357-389 (CDLLLLYVDREAGFYWRTKYEEARAPKTTTNSS) are cytoplasmic.

The protein belongs to the P2X receptor family. In terms of assembly, unlike most P2RXs, P2RX6 does not seem to form homotrimers. P2RX6 are likely to form as obligate heteromers with other P2RXs subunits. Forms heterotrimer with P2RX2 with a variable subunit stoichiometry determined by subunit expression levels. Forms heterotrimer with P2RX4; functional differences between homomeric P2RX4 and P2RX4/6 heterotrimer are minor. Forms a P2RX2/P2RX4/P2RX6 heterotrimer. Interacts with SF3A1; resulting in a reduction of the splicing activity. In terms of processing, N-glycosylated. N-linked glycosylation can affect trafficking to the membrane and function. As to expression, predominantly expressed in skeletal muscle. Also expressed in lung.

Its subcellular location is the cell membrane. It localises to the endoplasmic reticulum. The protein localises to the nucleus. It is found in the nucleus inner membrane. The enzyme catalyses Ca(2+)(in) = Ca(2+)(out). In terms of biological role, acts as a modulatory subunit rather than a functional channel. Unlike other P2XRs members, P2RX6 does not seem to form functional homotrimers. P2RX6 requires the presence of P2RX4 or P2RX2 to form functional heterotrimeric receptors at the plasma membrane. P2RX6 can be translocated to the nucleus, where it interacts with the splicing factor (SF3A1), to reduce the incidence of mRNA splicing. May function as a nuclear regulator of post-transcriptional modifications in neurons. In Mus musculus (Mouse), this protein is P2X purinoceptor 6 (P2rx6).